A 208-amino-acid polypeptide reads, in one-letter code: Proteasome subunit beta 2 (208 aa).

Positions 1 to 9 are cleaved as a propeptide — removed in mature form; by autocatalysis; that stretch reads MSGKKIVSK. Catalysis depends on Thr-10, which acts as the Nucleophile.

The protein belongs to the peptidase T1B family. As to quaternary structure, the 20S proteasome core is composed of 14 alpha and 14 beta subunits that assemble into four stacked heptameric rings, resulting in a barrel-shaped structure. The two inner rings, each composed of seven catalytic beta subunits, are sandwiched by two outer rings, each composed of seven alpha subunits. The catalytic chamber with the active sites is on the inside of the barrel. Has a gated structure, the ends of the cylinder being occluded by the N-termini of the alpha-subunits. Is capped at one or both ends by the proteasome regulatory ATPase, PAN.

The protein resides in the cytoplasm. It catalyses the reaction Cleavage of peptide bonds with very broad specificity.. With respect to regulation, the formation of the proteasomal ATPase PAN-20S proteasome complex, via the docking of the C-termini of PAN into the intersubunit pockets in the alpha-rings, triggers opening of the gate for substrate entry. Interconversion between the open-gate and close-gate conformations leads to a dynamic regulation of the 20S proteasome proteolysis activity. Its function is as follows. Component of the proteasome core, a large protease complex with broad specificity involved in protein degradation. This chain is Proteasome subunit beta 2, found in Staphylothermus marinus (strain ATCC 43588 / DSM 3639 / JCM 9404 / F1).